Consider the following 428-residue polypeptide: Keratin, type I cytoskeletal 18-A (428 aa).

The tract at residues 2 to 78 (SFRSQTSSTT…SVKGSGLFNN (77 aa)) is head. Positions 79–114 (EKETMQILNDRLASYLETVRNLEQANSKLELQIRET) are coil 1A. An IF rod domain is found at 79 to 390 (EKETMQILND…RLLDGEDFRL (312 aa)). A linker 1 region spans residues 115-131 (LEKRGPTTQDYSAYEKV). Positions 132–223 (VEDLKSQIYD…RSHQTDVEEL (92 aa)) are coil 1B. The linker 12 stretch occupies residues 224–247 (RKHISECGVQVDVDAPKGQDLSKI). The segment at 248–385 (MEEIRAQYET…IATYRRLLDG (138 aa)) is coil 2. The tail stretch occupies residues 386 to 428 (EDFRLQDALAVQTTKVQKKITVTETVVDGKVVSQSSEVQEIKK).

The protein belongs to the intermediate filament family. Heterotetramer of two type I and two type II keratins. Keratin-18 associates with keratin-8. Phosphorylated. Post-translationally, proteolytically cleaved by caspases during epithelial cell apoptosis.

When phosphorylated, plays a role in filament reorganization. This Polypterus senegalus (Senegal bichir) protein is Keratin, type I cytoskeletal 18-A.